The sequence spans 560 residues: 5'-nucleotidase (560 aa).

The first 21 residues, 1-21 (MNQRLIIKTALSAAILASLAG), serve as a signal peptide directing secretion. C22 carries the N-palmitoyl cysteine lipid modification. Residue C22 is the site of S-diacylglycerol cysteine attachment. A divalent metal cation is bound by residues D45, H47, D88, N120, H221, H256, and Q258. Residues F432 and 501–507 (YNASGGD) each bind substrate.

The protein belongs to the 5'-nucleotidase family. The cofactor is chloride. Mg(2+) serves as cofactor.

The protein resides in the cell outer membrane. It catalyses the reaction a ribonucleoside 5'-phosphate + H2O = a ribonucleoside + phosphate. Functionally, degradation of extracellular 5'-nucleotides for nutritional needs. In Vibrio parahaemolyticus serotype O3:K6 (strain RIMD 2210633), this protein is 5'-nucleotidase (nutA).